The following is a 611-amino-acid chain: Dihydroxy-acid dehydratase (611 aa).

Position 81 (Asp81) interacts with Mg(2+). Cys122 serves as a coordination point for [2Fe-2S] cluster. Positions 123 and 124 each coordinate Mg(2+). Residue Lys124 is modified to N6-carboxylysine. Residue Cys195 participates in [2Fe-2S] cluster binding. Position 491 (Glu491) interacts with Mg(2+). The active-site Proton acceptor is Ser517.

The protein belongs to the IlvD/Edd family. As to quaternary structure, homodimer. [2Fe-2S] cluster is required as a cofactor. Mg(2+) serves as cofactor.

The catalysed reaction is (2R)-2,3-dihydroxy-3-methylbutanoate = 3-methyl-2-oxobutanoate + H2O. It catalyses the reaction (2R,3R)-2,3-dihydroxy-3-methylpentanoate = (S)-3-methyl-2-oxopentanoate + H2O. It functions in the pathway amino-acid biosynthesis; L-isoleucine biosynthesis; L-isoleucine from 2-oxobutanoate: step 3/4. The protein operates within amino-acid biosynthesis; L-valine biosynthesis; L-valine from pyruvate: step 3/4. Functions in the biosynthesis of branched-chain amino acids. Catalyzes the dehydration of (2R,3R)-2,3-dihydroxy-3-methylpentanoate (2,3-dihydroxy-3-methylvalerate) into 2-oxo-3-methylpentanoate (2-oxo-3-methylvalerate) and of (2R)-2,3-dihydroxy-3-methylbutanoate (2,3-dihydroxyisovalerate) into 2-oxo-3-methylbutanoate (2-oxoisovalerate), the penultimate precursor to L-isoleucine and L-valine, respectively. This chain is Dihydroxy-acid dehydratase, found in Histophilus somni (strain 2336) (Haemophilus somnus).